The sequence spans 302 residues: Glutaminase (302 aa).

Substrate is bound by residues Ser61, Asn111, Glu155, Asn162, Tyr186, Tyr238, and Val256.

Belongs to the glutaminase family. Homotetramer.

The catalysed reaction is L-glutamine + H2O = L-glutamate + NH4(+). The protein is Glutaminase of Stutzerimonas stutzeri (strain A1501) (Pseudomonas stutzeri).